The sequence spans 592 residues: Transducer of Cdc42-dependent actin assembly protein 1 homolog (592 aa).

An F-BAR domain is found at 3-267 (DSCSWDQLWD…DIGLIDPSRD (265 aa)). Disordered stretches follow at residues 343 to 366 (FGGG…QQRA) and 447 to 519 (SATS…DELY). The region spanning 359 to 436 (TLPPQQRARK…IQKFKILLDD (78 aa)) is the REM-1 domain. The stretch at 363–441 (QQRARKIAGK…ILLDDVNAQL (79 aa)) forms a coiled coil. Polar residues predominate over residues 447-457 (SATSVGGSDTP). Over residues 459-474 (SIRSVSSASSGVTSRV) the composition is skewed to low complexity. Over residues 495–510 (FSGSNGGSDTDPTING) the composition is skewed to polar residues. An SH3 domain is found at 527 to 589 (PVLGEAIAQF…PSSYLKVTWF (63 aa)).

The protein belongs to the FNBP1 family. Interacts (via SH3 domain) with wsp-1. Interacts with cdc-42 and (via SH3 domain) with wve-1. Expressed in the germline and specifically in the gonads.

The protein localises to the cell junction. Its subcellular location is the apical cell membrane. The protein resides in the basolateral cell membrane. It localises to the cytoplasmic vesicle. It is found in the cytoplasm. The protein localises to the perinuclear region. Its subcellular location is the recycling endosome. Functionally, plays a role in protein trafficking, actin organization and embryonic morphogenesis. Potentially acts as a cdc-42 effector. May play a role in hypodermal P-cell nuclear positioning. Together with toca-2, is required for protein trafficking regulating yolk protein clathrin-mediated endocytosis by oocytes during oogenesis and retrograde recycling and the sorting of recycling endosome cargo proteins such as mig-14. Also, together with toca-2, controls the distribution of actin at cell junctions. This Caenorhabditis elegans protein is Transducer of Cdc42-dependent actin assembly protein 1 homolog.